A 254-amino-acid polypeptide reads, in one-letter code: Large ribosomal subunit protein uL2B (254 aa).

K46 participates in a covalent cross-link: Glycyl lysine isopeptide (Lys-Gly) (interchain with G-Cter in ubiquitin). S52 bears the Phosphoserine mark. K93 participates in a covalent cross-link: Glycyl lysine isopeptide (Lys-Gly) (interchain with G-Cter in ubiquitin). Residue S95 is modified to Phosphoserine. Glycyl lysine isopeptide (Lys-Gly) (interchain with G-Cter in ubiquitin) cross-links involve residues K119 and K145. Phosphoserine is present on residues S159, S160, and S249.

This sequence belongs to the universal ribosomal protein uL2 family. As to quaternary structure, component of the large ribosomal subunit (LSU). Mature yeast ribosomes consist of a small (40S) and a large (60S) subunit. The 40S small subunit contains 1 molecule of ribosomal RNA (18S rRNA) and 33 different proteins (encoded by 57 genes). The large 60S subunit contains 3 rRNA molecules (25S, 5.8S and 5S rRNA) and 46 different proteins (encoded by 81 genes).

It is found in the cytoplasm. Component of the ribosome, a large ribonucleoprotein complex responsible for the synthesis of proteins in the cell. The small ribosomal subunit (SSU) binds messenger RNAs (mRNAs) and translates the encoded message by selecting cognate aminoacyl-transfer RNA (tRNA) molecules. The large subunit (LSU) contains the ribosomal catalytic site termed the peptidyl transferase center (PTC), which catalyzes the formation of peptide bonds, thereby polymerizing the amino acids delivered by tRNAs into a polypeptide chain. The nascent polypeptides leave the ribosome through a tunnel in the LSU and interact with protein factors that function in enzymatic processing, targeting, and the membrane insertion of nascent chains at the exit of the ribosomal tunnel. The chain is Large ribosomal subunit protein uL2B from Saccharomyces cerevisiae (strain ATCC 204508 / S288c) (Baker's yeast).